A 254-amino-acid polypeptide reads, in one-letter code: 3-deoxy-manno-octulosonate cytidylyltransferase (254 aa).

This sequence belongs to the KdsB family.

The protein localises to the cytoplasm. The catalysed reaction is 3-deoxy-alpha-D-manno-oct-2-ulosonate + CTP = CMP-3-deoxy-beta-D-manno-octulosonate + diphosphate. Its pathway is nucleotide-sugar biosynthesis; CMP-3-deoxy-D-manno-octulosonate biosynthesis; CMP-3-deoxy-D-manno-octulosonate from 3-deoxy-D-manno-octulosonate and CTP: step 1/1. It participates in bacterial outer membrane biogenesis; lipopolysaccharide biosynthesis. Functionally, activates KDO (a required 8-carbon sugar) for incorporation into bacterial lipopolysaccharide in Gram-negative bacteria. In Pseudomonas fluorescens (strain SBW25), this protein is 3-deoxy-manno-octulosonate cytidylyltransferase.